Consider the following 403-residue polypeptide: Flagellar hook protein FlgE (403 aa).

The protein belongs to the flagella basal body rod proteins family.

It localises to the bacterial flagellum basal body. This Salmonella typhi protein is Flagellar hook protein FlgE (flgE).